The following is a 420-amino-acid chain: Nucleobindin-2 (420 aa).

A signal peptide spans 1–24; the sequence is MRWRTIQARYCFLLVPCVLTALEA. A DNA-binding region spans residues 171 to 223; the sequence is RTRHEEFKKYEMMKEHERREYLKTLSEEKRKEEEAKFAEMKRKHEDHPKVNHP. Positions 194 to 225 are disordered; that stretch reads TLSEEKRKEEEAKFAEMKRKHEDHPKVNHPGS. Residues 213 to 420 form a binds to necdin region; sequence KHEDHPKVNH…AGELKFEPHT (208 aa). 2 consecutive EF-hand domains span residues 241-276 and 293-328; these read PNDFDPKTFFKLHDVNNDGFLDEQELEALFTKELDK and ERLRMREHVMNEIDNNKDRLVTLEEFLRATEKKEFL. Residues Asp254, Asn256, Asp258, Glu265, Asp306, Asn308, Asp310, and Glu317 each contribute to the Ca(2+) site. The short motif at 304-334 is the GBA element; it reads EIDNNKDRLVTLEEFLRATEKKEFLEPDSWE. The residue at position 332 (Ser332) is a Phosphoserine. The segment covering 366–386 has biased composition (basic and acidic residues); the sequence is DELQKQKEELQRQHDHLEAQK. The segment at 366 to 420 is disordered; that stretch reads DELQKQKEELQRQHDHLEAQKQEYQQAVQQLEQKKFQQGIAPSGPAGELKFEPHT. A compositionally biased stretch (low complexity) spans 387 to 396; sequence QEYQQAVQQL.

The protein belongs to the nucleobindin family. In terms of assembly, interacts (via GBA motif) with guanine nucleotide-binding protein G(i) alpha subunit GNAI3. Preferentially interacts with inactive rather than active GNAI3. Interaction with GNAI3 is inhibited when NUCB2 binds calcium, probably due to a conformational change which renders the GBA motif inaccessible. Binds to the postmitotic growth suppressor NDN; coexpression abolishes NUCB2 secretion. Interacts with MC4R.

The protein resides in the golgi apparatus. It localises to the endoplasmic reticulum. The protein localises to the nucleus envelope. It is found in the membrane. Its subcellular location is the cytoplasm. The protein resides in the secreted. Its function is as follows. Calcium-binding protein which may have a role in calcium homeostasis. Acts as a non-receptor guanine nucleotide exchange factor which binds to and activates guanine nucleotide-binding protein (G-protein) alpha subunit GNAI3. Functionally, anorexigenic peptide, seems to play an important role in hypothalamic pathways regulating food intake and energy homeostasis, acting in a leptin-independent manner. May also exert hypertensive roles and modulate blood pressure through directly acting on peripheral arterial resistance. In intestinal epithelial cells, plays a role in the inhibition of hepatic glucose production via MC4R receptor leading to increased cyclic adenosine monophosphate (cAMP) levels and glucagon-like peptide 1 (GLP-1) secretion. In Rattus norvegicus (Rat), this protein is Nucleobindin-2 (Nucb2).